Here is a 320-residue protein sequence, read N- to C-terminus: Cytochrome f (320 aa).

A signal peptide spans Met1–Ser32. Positions 36, 56, 59, and 60 each coordinate heme. A helical transmembrane segment spans residues Ile286 to Lys306.

This sequence belongs to the cytochrome f family. As to quaternary structure, the 4 large subunits of the cytochrome b6-f complex are cytochrome b6, subunit IV (17 kDa polypeptide, petD), cytochrome f and the Rieske protein, while the 4 small subunits are PetG, PetL, PetM and PetN. The complex functions as a dimer. Requires heme as cofactor.

The protein localises to the plastid. The protein resides in the chloroplast thylakoid membrane. In terms of biological role, component of the cytochrome b6-f complex, which mediates electron transfer between photosystem II (PSII) and photosystem I (PSI), cyclic electron flow around PSI, and state transitions. The chain is Cytochrome f from Gnetum parvifolium (Small-leaved jointfir).